The following is a 41-amino-acid chain: Bacteriocin bavaricin-A (41 aa).

The protein belongs to the bacteriocin class IIA/YGNGV family.

It localises to the secreted. Its function is as follows. This heat stable bacteriocin shows activity against species of Lactobacillus, Listeria monocytogenes, Pediococcus, Enterococcus, Leuconostoc and Lactococcus. The protein is Bacteriocin bavaricin-A of Latilactobacillus sakei (Lactobacillus sakei).